The sequence spans 113 residues: Large ribosomal subunit protein uL22 (113 aa).

It belongs to the universal ribosomal protein uL22 family. As to quaternary structure, part of the 50S ribosomal subunit.

In terms of biological role, this protein binds specifically to 23S rRNA; its binding is stimulated by other ribosomal proteins, e.g. L4, L17, and L20. It is important during the early stages of 50S assembly. It makes multiple contacts with different domains of the 23S rRNA in the assembled 50S subunit and ribosome. The globular domain of the protein is located near the polypeptide exit tunnel on the outside of the subunit, while an extended beta-hairpin is found that lines the wall of the exit tunnel in the center of the 70S ribosome. The sequence is that of Large ribosomal subunit protein uL22 from Geobacillus stearothermophilus (Bacillus stearothermophilus).